Here is a 196-residue protein sequence, read N- to C-terminus: Probable nicotinate-nucleotide adenylyltransferase (196 aa).

Belongs to the NadD family.

The catalysed reaction is nicotinate beta-D-ribonucleotide + ATP + H(+) = deamido-NAD(+) + diphosphate. The protein operates within cofactor biosynthesis; NAD(+) biosynthesis; deamido-NAD(+) from nicotinate D-ribonucleotide: step 1/1. In terms of biological role, catalyzes the reversible adenylation of nicotinate mononucleotide (NaMN) to nicotinic acid adenine dinucleotide (NaAD). In Thermotoga sp. (strain RQ2), this protein is Probable nicotinate-nucleotide adenylyltransferase.